We begin with the raw amino-acid sequence, 211 residues long: UPF0637 protein BLi01683/BL05149 (211 aa).

This sequence belongs to the UPF0637 family.

This chain is UPF0637 protein BLi01683/BL05149, found in Bacillus licheniformis (strain ATCC 14580 / DSM 13 / JCM 2505 / CCUG 7422 / NBRC 12200 / NCIMB 9375 / NCTC 10341 / NRRL NRS-1264 / Gibson 46).